Reading from the N-terminus, the 266-residue chain is NADP-dependent mannitol dehydrogenase (266 aa).

Positions 107 and 140 each coordinate NADP(+). S159 functions as the Proton donor in the catalytic mechanism. Residues Y174, K178, I206, and T208 each coordinate NADP(+). Y174 functions as the Proton acceptor in the catalytic mechanism. Residue K178 is the Lowers pKa of active site Tyr of the active site.

The protein belongs to the short-chain dehydrogenases/reductases (SDR) family. Homotetramer.

The enzyme catalyses D-mannitol + NADP(+) = D-fructose + NADPH + H(+). Catalyzes the interconversion between D-mannitol and D-fructose. Plays a key role in liamocins biosynthesis by providing the mannitol moity that is linked to 3,5-dihydroxydecanoic acid (provided by the HR-PKS PKS1) via ester bond formation catalyzed by the esterase EST1. The protein is NADP-dependent mannitol dehydrogenase of Aureobasidium melanogenum (Aureobasidium pullulans var. melanogenum).